A 492-amino-acid chain; its full sequence is Histone-lysine N-methyltransferase SUVR4 (492 aa).

Residues 112 to 138 form a disordered region; the sequence is ETRSASSGSSIQVVQKQPQLSNGDRKR. Residues 113–133 are compositionally biased toward polar residues; that stretch reads TRSASSGSSIQVVQKQPQLSN. Residues cysteine 196, cysteine 197, cysteine 200, cysteine 204, cysteine 213, cysteine 281, cysteine 285, cysteine 287, and cysteine 291 each contribute to the Zn(2+) site. The Pre-SET domain occupies 196–299; it reads CCANCKGNCL…QCGNRVVQRG (104 aa). Residues 302-435 enclose the SET domain; that stretch reads CQLQVYFTQE…AMDELTWDYM (134 aa). Residues 313-315 and 391-392 each bind S-adenosyl-L-methionine; these read KGW and NH. Cysteine 394 lines the Zn(2+) pocket. Tyrosine 434 lines the S-adenosyl-L-methionine pocket. The Post-SET domain occupies 446 to 462; it reads KAFRCCCGSESCRDRKI. Residues cysteine 450, cysteine 452, and cysteine 457 each coordinate Zn(2+). The tract at residues 463 to 492 is disordered; sequence KGSQGKSIERRKIVSAKKQQGSKEVSKKRK.

Belongs to the class V-like SAM-binding methyltransferase superfamily. Histone-lysine methyltransferase family. As to quaternary structure, interacts with ubiquitin.

It is found in the nucleus. Its subcellular location is the chromosome. It catalyses the reaction N(6)-methyl-L-lysyl(9)-[histone H3] + S-adenosyl-L-methionine = N(6),N(6)-dimethyl-L-lysyl(9)-[histone H3] + S-adenosyl-L-homocysteine + H(+). The enzyme catalyses N(6),N(6)-dimethyl-L-lysyl(9)-[histone H3] + S-adenosyl-L-methionine = N(6),N(6),N(6)-trimethyl-L-lysyl(9)-[histone H3] + S-adenosyl-L-homocysteine + H(+). In terms of biological role, histone methyltransferase that converts monomethylated 'Lys-9' of histone H3 (H3K9me1) to dimethylated 'Lys-9' (H3K9me2) in the absence of bound ubiquitin, and to trimethylated 'Lys-9' (H3K9me3) in the presence of bound ubiquitin. Acts in a locus-specific manner and contributes to the transcriptional silencing of pseudogenes and transposons. H3 'Lys-9' methylation represents a specific tag for epigenetic transcriptional repression. The sequence is that of Histone-lysine N-methyltransferase SUVR4 (SUVR4) from Arabidopsis thaliana (Mouse-ear cress).